Here is a 118-residue protein sequence, read N- to C-terminus: Large ribosomal subunit protein bL19 (118 aa).

Belongs to the bacterial ribosomal protein bL19 family.

In terms of biological role, this protein is located at the 30S-50S ribosomal subunit interface and may play a role in the structure and function of the aminoacyl-tRNA binding site. The polypeptide is Large ribosomal subunit protein bL19 (Geotalea daltonii (strain DSM 22248 / JCM 15807 / FRC-32) (Geobacter daltonii)).